The following is a 251-amino-acid chain: GTP cyclohydrolase 1 type 2 homolog (251 aa).

His-64, His-65, Asp-102, His-219, and Glu-223 together coordinate a divalent metal cation.

This sequence belongs to the GTP cyclohydrolase I type 2/NIF3 family. In terms of assembly, homohexamer.

This chain is GTP cyclohydrolase 1 type 2 homolog, found in Chlamydia pneumoniae (Chlamydophila pneumoniae).